The primary structure comprises 318 residues: V-set and immunoglobulin domain-containing protein 1 (318 aa).

The signal sequence occupies residues 1–19 (MSFLLFITLGLSLTALSHC). Residues 20–131 (VQVTIQNPII…SSGQGKILLT (112 aa)) form the Ig-like V-type domain. Over 20–233 (VQVTIQNPII…TGGEGGVIAA (214 aa)) the chain is Extracellular. Intrachain disulfides connect cysteine 41–cysteine 114 and cysteine 157–cysteine 207. The Ig-like C2-type domain maps to 136-223 (PSVPHCSIRG…GNATCELNLH (88 aa)). Residues 234 to 254 (AVIGGLLAAAIIIAIVWFLVV) traverse the membrane as a helical segment. Over 255–318 (KRKQKKQLPP…ANGETEEPTA (64 aa)) the chain is Cytoplasmic. The tract at residues 261–318 (QLPPTKEMKTGGNQYMAVSGEANEPPKENLGASEPTETIQFHDHAENAANGETEEPTA) is disordered.

In terms of tissue distribution, expressed in thymocytes.

It is found in the membrane. The protein is V-set and immunoglobulin domain-containing protein 1 (vsig1) of Xenopus laevis (African clawed frog).